Here is a 648-residue protein sequence, read N- to C-terminus: UDP-galactose:fucoside alpha-3-galactosyltransferase (648 aa).

WD repeat units lie at residues 320–358 (NHTD…GNDT), 372–420 (HKRG…IQTF), 422–461 (GHTG…FKRV), 464–505 (GHNG…NIIK), 507–546 (NQGG…NFND), 556–595 (NENS…NNNN), and 617–648 (HLNS…SWDL).

The protein belongs to the glycosyltransferase 77 family. It depends on Mn(2+) as a cofactor.

The protein localises to the cytoplasm. The enzyme catalyses an alpha-L-fucosyl-(1-&gt;2)-beta-D-galactosyl derivative + UDP-alpha-D-galactose = an alpha-D-galactosyl-(1-&gt;3)-[alpha-L-fucosyl-(1-&gt;2)]-beta-D-galactosyl derivative + UDP + H(+). It functions in the pathway protein modification; protein glycosylation. With respect to regulation, stimulated by dithiothreitol (DTT) in vitro. Totally inhibited by EDTA. Functionally, specifically catalyzes the transfer of a galactosyl residue to the hydroxyproline-linked saccharide on Skp1 protein (fpaA/fpaB). Catalyzes the formation of a Gal-alpha-1,3-Fuc linkage, leading to Gal-Fuc-Gal-GlcNAc-HyPro143-Skp1. The polypeptide is UDP-galactose:fucoside alpha-3-galactosyltransferase (agtA) (Dictyostelium discoideum (Social amoeba)).